The following is a 389-amino-acid chain: MDFVHCNKCFNRKPPDGFFISSCFHIFCTKCAKADLAVCLICKKNVRLVRLDGNISSGIKIYFADPIKMVADSLAKIQKKIDFQQSTRDHLVKYLTKEKEKKRQMEVYFRTKGQEFDSQRKKLAEATAWIQMAEKKLQASEEERVKAEREIEECQAKLKSMTNLMSADTLGMNSQTPFPFSLAESQETAPSLVESSANSTFNMVSPLVSSPASSPNSINYNSFFENGSRTRPESLNEEAMFNTMLQSSGQSANANTSESSAFSVAFNNIFTPSRNNMGDSSMINKTTANQTIMDKTSMSLENWRQNRANSFGVHDISKRDSSLPTGGGSAIRVHHFKQNSRITPIAQNRRSAAGFDRQQIQEMRRISSQPGYLAQRKPINGRSFIGPAD.

The RING-type zinc finger occupies 6–43 (CNKCFNRKPPDGFFISSCFHIFCTKCAKADLAVCLICK). Positions 123–164 (LAEATAWIQMAEKKLQASEEERVKAEREIEECQAKLKSMTNL) form a coiled coil. The disordered stretch occupies residues 366–389 (ISSQPGYLAQRKPINGRSFIGPAD).

Interacts with zhp-4; the interaction is required for their localization along paired chromosomes and stability, and for the formation of chiasma during meiotic recombination. As to expression, expressed througout the gonad (at protein level). Expressed in the germline.

It is found in the chromosome. Its function is as follows. Recruited co-dependently with zhp-4 to the synaptonemal complex between homologous chromosome pairs to regulate the formation and number of crossover events between homologs during meiotic recombination. In the early stages of pachytene, in complex with zhp-4, recruited by the zhp-1-zhp-2 heterodimer to designated crossover sites along the homolog pair to stabilize other pro-crossover factors such as rmh-1, msh-5 and cosa-1. This in turn facilitates crossover and promotes the formation of chiasma in each meiotic nucleus at the late pachytene stage of meiosis. Plays a role in the segregation of homologous chromosomes following the completion of crossovers. Together with him-14 and msh-5 plays a role in the activation of DNA damage-dependent apoptosis at the DNA damage checkpoint in pachytene cells. The sequence is that of Zip homologous protein 3 from Caenorhabditis elegans.